We begin with the raw amino-acid sequence, 157 residues long: Ribonuclease 8 (157 aa).

The first 30 residues, 1 to 30 (MAPARAGCCPLLLLLLLLLGLWVAEVLVSA), serve as a signal peptide directing secretion. The active-site Proton acceptor is the His45. Cystine bridges form between Cys53-Cys96, Cys67-Cys121, Cys85-Cys136, and Cys92-Cys99. Substrate-binding positions include 68-72 (KDLNT) and Lys93. His152 serves as the catalytic Proton donor.

This sequence belongs to the pancreatic ribonuclease family.

The protein localises to the secreted. Functionally, has a low ribonuclease activity. This Pan troglodytes (Chimpanzee) protein is Ribonuclease 8 (RNASE8).